The chain runs to 94 residues: Enhancer of yellow 2 transcription factor (94 aa).

Belongs to the ENY2 family. As to quaternary structure, component of the nuclear pore complex (NPC)-associated AMEX complex (anchoring and mRNA export complex), composed of at least e(y)2 and xmas-2. Component of the SAGA transcription coactivator-HAT complexes, at least composed of Ada2b, e(y)2, Pcaf/Gcn5, Taf10 and Nipped-A/Trrap. Within the SAGA complex, e(y)2, Sgf11, and not/nonstop form an additional subcomplex of SAGA called the DUB module (deubiquitination module). Component of the THO complex, composed of at least e(y)2, HPR1, THO2, THOC5, THOC6 and THOC7. Interacts with e(y)1. Interacts with su(Hw) (via zinc fingers). Interacts with xmas-2; required for localization to the nuclear periphery. Interacts with the nuclear pore complex (NPC).

It localises to the nucleus. It is found in the nucleoplasm. The protein localises to the cytoplasm. Functionally, involved in mRNA export coupled transcription activation by association with both the AMEX and the SAGA complexes. The SAGA complex is a multiprotein complex that activates transcription by remodeling chromatin and mediating histone acetylation and deubiquitination. Within the SAGA complex, participates in a subcomplex that specifically deubiquitinates histone H2B. The SAGA complex is recruited to specific gene promoters by activators, where it is required for transcription. Required for nuclear receptor-mediated transactivation. Involved in transcription elongation by recruiting the THO complex onto nascent mRNA. The AMEX complex functions in docking export-competent ribonucleoprotein particles (mRNPs) to the nuclear entrance of the nuclear pore complex (nuclear basket). AMEX participates in mRNA export and accurate chromatin positioning in the nucleus by tethering genes to the nuclear periphery. This Drosophila grimshawi (Hawaiian fruit fly) protein is Enhancer of yellow 2 transcription factor.